The primary structure comprises 210 residues: C4-dicarboxylate TRAP transporter small permease protein DctQ (210 aa).

Transmembrane regions (helical) follow at residues 13–33, 77–97, 113–133, and 160–180; these read EGLI…YVVL, ALFA…AGHL, VLGV…CVAS, and IGLI…EILV.

Belongs to the TRAP transporter small permease family. As to quaternary structure, the complex comprises the extracytoplasmic solute receptor protein DctP, and the two transmembrane proteins DctQ and DctM.

The protein resides in the cell inner membrane. Its function is as follows. Part of the tripartite ATP-independent periplasmic (TRAP) transport system DctPQM involved in C4-dicarboxylates uptake. This chain is C4-dicarboxylate TRAP transporter small permease protein DctQ, found in Pseudomonas aeruginosa (strain ATCC 15692 / DSM 22644 / CIP 104116 / JCM 14847 / LMG 12228 / 1C / PRS 101 / PAO1).